The primary structure comprises 185 residues: Threonylcarbamoyl-AMP synthase (185 aa).

The 183-residue stretch at 3 to 185 folds into the YrdC-like domain; the sequence is EQAPAEVKQV…IDAISGKILR (183 aa).

This sequence belongs to the SUA5 family. TsaC subfamily.

It localises to the cytoplasm. The catalysed reaction is L-threonine + hydrogencarbonate + ATP = L-threonylcarbamoyladenylate + diphosphate + H2O. Required for the formation of a threonylcarbamoyl group on adenosine at position 37 (t(6)A37) in tRNAs that read codons beginning with adenine. Catalyzes the conversion of L-threonine, HCO(3)(-)/CO(2) and ATP to give threonylcarbamoyl-AMP (TC-AMP) as the acyladenylate intermediate, with the release of diphosphate. The sequence is that of Threonylcarbamoyl-AMP synthase from Shewanella woodyi (strain ATCC 51908 / MS32).